Here is a 338-residue protein sequence, read N- to C-terminus: UDP-N-acetylenolpyruvoylglucosamine reductase (338 aa).

The FAD-binding PCMH-type domain maps to isoleucine 17–arginine 188. Arginine 164 is an active-site residue. Serine 237 (proton donor) is an active-site residue. Residue glutamate 333 is part of the active site.

It belongs to the MurB family. It depends on FAD as a cofactor.

It localises to the cytoplasm. The enzyme catalyses UDP-N-acetyl-alpha-D-muramate + NADP(+) = UDP-N-acetyl-3-O-(1-carboxyvinyl)-alpha-D-glucosamine + NADPH + H(+). It functions in the pathway cell wall biogenesis; peptidoglycan biosynthesis. Functionally, cell wall formation. The sequence is that of UDP-N-acetylenolpyruvoylglucosamine reductase from Porphyromonas gingivalis (strain ATCC 33277 / DSM 20709 / CIP 103683 / JCM 12257 / NCTC 11834 / 2561).